A 921-amino-acid chain; its full sequence is Isoleucine--tRNA ligase (921 aa).

Positions 57–67 (PYANGELHMGH) match the 'HIGH' region motif. Glu552 contributes to the L-isoleucyl-5'-AMP binding site. The 'KMSKS' region motif lies at 593-597 (KMSKS). Residue Lys596 participates in ATP binding. Zn(2+) is bound by residues Cys888, Cys891, Cys908, and Cys911.

This sequence belongs to the class-I aminoacyl-tRNA synthetase family. IleS type 1 subfamily. Monomer. It depends on Zn(2+) as a cofactor.

It is found in the cytoplasm. The enzyme catalyses tRNA(Ile) + L-isoleucine + ATP = L-isoleucyl-tRNA(Ile) + AMP + diphosphate. Its function is as follows. Catalyzes the attachment of isoleucine to tRNA(Ile). As IleRS can inadvertently accommodate and process structurally similar amino acids such as valine, to avoid such errors it has two additional distinct tRNA(Ile)-dependent editing activities. One activity is designated as 'pretransfer' editing and involves the hydrolysis of activated Val-AMP. The other activity is designated 'posttransfer' editing and involves deacylation of mischarged Val-tRNA(Ile). The protein is Isoleucine--tRNA ligase of Listeria monocytogenes serotype 4b (strain F2365).